A 716-amino-acid polypeptide reads, in one-letter code: Fatty acid oxidation complex subunit alpha (716 aa).

The interval 1-189 (MIYQSPTIQV…KVGAVDAVVA (189 aa)) is enoyl-CoA hydratase/isomerase. D296 provides a ligand contact to substrate. The segment at 311 to 716 (KEVNNAAVLG…AANNGSYYQA (406 aa)) is 3-hydroxyacyl-CoA dehydrogenase. NAD(+) contacts are provided by residues M324, D343, 400 to 402 (VVE), K407, and S429. H450 serves as the catalytic For 3-hydroxyacyl-CoA dehydrogenase activity. N453 contacts NAD(+). Substrate contacts are provided by N500 and Y660.

In the N-terminal section; belongs to the enoyl-CoA hydratase/isomerase family. This sequence in the C-terminal section; belongs to the 3-hydroxyacyl-CoA dehydrogenase family. As to quaternary structure, heterotetramer of two alpha chains (FadB) and two beta chains (FadA).

The enzyme catalyses a (3S)-3-hydroxyacyl-CoA + NAD(+) = a 3-oxoacyl-CoA + NADH + H(+). It carries out the reaction a (3S)-3-hydroxyacyl-CoA = a (2E)-enoyl-CoA + H2O. It catalyses the reaction a 4-saturated-(3S)-3-hydroxyacyl-CoA = a (3E)-enoyl-CoA + H2O. The catalysed reaction is (3S)-3-hydroxybutanoyl-CoA = (3R)-3-hydroxybutanoyl-CoA. The enzyme catalyses a (3Z)-enoyl-CoA = a 4-saturated (2E)-enoyl-CoA. It carries out the reaction a (3E)-enoyl-CoA = a 4-saturated (2E)-enoyl-CoA. It functions in the pathway lipid metabolism; fatty acid beta-oxidation. Its function is as follows. Involved in the aerobic and anaerobic degradation of long-chain fatty acids via beta-oxidation cycle. Catalyzes the formation of 3-oxoacyl-CoA from enoyl-CoA via L-3-hydroxyacyl-CoA. It can also use D-3-hydroxyacyl-CoA and cis-3-enoyl-CoA as substrate. The sequence is that of Fatty acid oxidation complex subunit alpha from Shewanella baltica (strain OS223).